We begin with the raw amino-acid sequence, 505 residues long: Maturase K (505 aa).

This sequence belongs to the intron maturase 2 family. MatK subfamily.

The protein localises to the plastid. The protein resides in the chloroplast. Its function is as follows. Usually encoded in the trnK tRNA gene intron. Probably assists in splicing its own and other chloroplast group II introns. This is Maturase K from Dioon edule (Virgin's palm).